A 390-amino-acid chain; its full sequence is Histamine H4 receptor (390 aa).

Topologically, residues 1–19 (MPDTNSTINLSLSTRVTLA) are extracellular. N-linked (GlcNAc...) asparagine glycans are attached at residues Asn-5 and Asn-9. Residues 20-40 (FFMSLVAFAIMLGNALVILAF) traverse the membrane as a helical segment. Residues 41–52 (VVDKNLRHRSSY) lie on the Cytoplasmic side of the membrane. Residues 53–73 (FFLNLAISDFFVGVISIPLYI) traverse the membrane as a helical segment. The Extracellular portion of the chain corresponds to 74–87 (PHTLFEWDFGKEIC). The cysteines at positions 87 and 164 are disulfide-linked. A helical transmembrane segment spans residues 88–108 (VFWLTTDYLLCTASVYNIVLI). Residues 109 to 131 (SYDRYLSVSNAVSYRTQHTGVLK) are Cytoplasmic-facing. The chain crosses the membrane as a helical span at residues 132–152 (IVTLMVAVWVLAFLVNGPMIL). The Extracellular segment spans residues 153 to 172 (VSESWKDEGSECEPGFFSEW). A helical transmembrane segment spans residues 173–193 (YILAITSFLEFVIPVILVAYF). The Cytoplasmic segment spans residues 194 to 304 (NMNIYWSLWK…LLRARRLAKS (111 aa)). The helical transmembrane segment at 305 to 325 (LAILLGVFAVCWAPYSLFTIV) threads the bilayer. Topologically, residues 326–341 (LSFYSSATGPKSVWYR) are extracellular. Residues 342–362 (IAFWLQWFNSFVNPLLYPLCH) traverse the membrane as a helical segment. Residues 363–390 (KRFQKAFLKIFCIKKQPLPSQHSRSVSS) are Cytoplasmic-facing.

Belongs to the G-protein coupled receptor 1 family. Interacts with TSPAN4. In terms of tissue distribution, expressed primarily in the bone marrow and eosinophils. Shows preferential distribution in cells of immunological relevance such as T-cells, dendritic cells, monocytes, mast cells, neutrophils. Also expressed in a wide variety of peripheral tissues, including the heart, kidney, liver, lung, pancreas, skeletal muscle, prostate, small intestine, spleen, testis, colon, fetal liver and lymph node.

The protein localises to the cell membrane. The H4 subclass of histamine receptors could mediate the histamine signals in peripheral tissues. Displays a significant level of constitutive activity (spontaneous activity in the absence of agonist). The chain is Histamine H4 receptor (HRH4) from Homo sapiens (Human).